A 645-amino-acid chain; its full sequence is Threonine--tRNA ligase (645 aa).

Residues 1 to 63 form the TGS domain; it reads MEQINIQFPD…ETDGSIEIVT (63 aa). The catalytic stretch occupies residues 242-540; the sequence is DHRKIGKELE…LTEETKGAFP (299 aa). 3 residues coordinate Zn(2+): Cys336, His387, and His517.

It belongs to the class-II aminoacyl-tRNA synthetase family. As to quaternary structure, homodimer. It depends on Zn(2+) as a cofactor.

Its subcellular location is the cytoplasm. The enzyme catalyses tRNA(Thr) + L-threonine + ATP = L-threonyl-tRNA(Thr) + AMP + diphosphate + H(+). Its function is as follows. Catalyzes the attachment of threonine to tRNA(Thr) in a two-step reaction: L-threonine is first activated by ATP to form Thr-AMP and then transferred to the acceptor end of tRNA(Thr). Also edits incorrectly charged L-seryl-tRNA(Thr). This Staphylococcus aureus (strain JH1) protein is Threonine--tRNA ligase.